A 693-amino-acid polypeptide reads, in one-letter code: Homoaconitase, mitochondrial (693 aa).

The N-terminal 17 residues, 1-17 (MFRVQRLRMFSTSRALY), are a transit peptide targeting the mitochondrion. [4Fe-4S] cluster-binding residues include C338, C405, and C408.

Belongs to the aconitase/IPM isomerase family. It depends on [4Fe-4S] cluster as a cofactor.

The protein localises to the mitochondrion. It carries out the reaction (2R,3S)-homoisocitrate = cis-homoaconitate + H2O. The protein operates within amino-acid biosynthesis; L-lysine biosynthesis via AAA pathway; L-alpha-aminoadipate from 2-oxoglutarate: step 3/5. Functionally, catalyzes the reversible hydration of cis-homoaconitate to (2R,3S)-homoisocitrate, a step in the alpha-aminoadipate pathway for lysine biosynthesis. This Kluyveromyces lactis (strain ATCC 8585 / CBS 2359 / DSM 70799 / NBRC 1267 / NRRL Y-1140 / WM37) (Yeast) protein is Homoaconitase, mitochondrial (LYS4).